We begin with the raw amino-acid sequence, 143 residues long: Protein RJ1 (143 aa).

An N-terminal signal peptide occupies residues 1-26 (MARVMTRGMARVSTLATVRVSTLARA).

The protein is Protein RJ1 (RJ1) of Human herpesvirus 6A (strain Uganda-1102) (HHV-6 variant A).